Reading from the N-terminus, the 554-residue chain is Condensin-2 complex subunit H2 (554 aa).

5 positions are modified to phosphoserine: serine 45, serine 178, serine 182, serine 199, and serine 200. The tract at residues 154–296 (PVDVHPMPRS…GQKRKRKGAT (143 aa)) is disordered. A compositionally biased stretch (polar residues) spans 179 to 191 (RNGSPVSVRSISQ). A compositionally biased stretch (acidic residues) spans 201–210 (GDEDAEDVAE). Position 441 is a phosphoserine (serine 441).

It belongs to the CND2 H2 (condensin-2 subunit 2) family. As to quaternary structure, component of the condensin-2 complex, which contains the SMC2 and SMC4 heterodimer, and three non SMC subunits, NCAPG2, NCAPH2 and NCAPD3 that probably regulate the complex.

Its subcellular location is the nucleus. Its function is as follows. Regulatory subunit of the condensin-2 complex, a complex that seems to provide chromosomes with an additional level of organization and rigidity and in establishing mitotic chromosome architecture. May promote the resolution of double-strand DNA catenanes (intertwines) between sister chromatids. Condensin-mediated compaction likely increases tension in catenated sister chromatids, providing directionality for type II topoisomerase-mediated strand exchanges toward chromatid decatenation. Required for decatenation of chromatin bridges at anaphase. Early in neurogenesis, may play an essential role to ensure accurate mitotic chromosome condensation in neuron stem cells, ultimately affecting neuron pool and cortex size. Seems to have lineage-specific role in T-cell development. The protein is Condensin-2 complex subunit H2 (Ncaph2) of Rattus norvegicus (Rat).